A 156-amino-acid polypeptide reads, in one-letter code: Deoxyuridine 5'-triphosphate nucleotidohydrolase (156 aa).

Substrate contacts are provided by residues 76 to 78 (RSG), Asn89, 93 to 95 (TVD), and Lys103.

It belongs to the dUTPase family. The cofactor is Mg(2+).

It carries out the reaction dUTP + H2O = dUMP + diphosphate + H(+). The protein operates within pyrimidine metabolism; dUMP biosynthesis; dUMP from dCTP (dUTP route): step 2/2. Functionally, this enzyme is involved in nucleotide metabolism: it produces dUMP, the immediate precursor of thymidine nucleotides and it decreases the intracellular concentration of dUTP so that uracil cannot be incorporated into DNA. This chain is Deoxyuridine 5'-triphosphate nucleotidohydrolase, found in Rhizobium etli (strain ATCC 51251 / DSM 11541 / JCM 21823 / NBRC 15573 / CFN 42).